The following is a 50-amino-acid chain: Large ribosomal subunit protein bL32 (50 aa).

Positions 1-26 (MAVPKRRVSHTRSAKRRTHYKITLKK) are enriched in basic residues. The interval 1-50 (MAVPKRRVSHTRSAKRRTHYKITLKKPVKDSDGSWKMPHMVNPNTGEYKN) is disordered.

This sequence belongs to the bacterial ribosomal protein bL32 family.

The sequence is that of Large ribosomal subunit protein bL32 from Aliarcobacter butzleri (strain RM4018) (Arcobacter butzleri).